The chain runs to 312 residues: Probable deoxyhypusine synthase (312 aa).

The active-site Nucleophile is the lysine 285.

This sequence belongs to the deoxyhypusine synthase family. The cofactor is NAD(+).

The catalysed reaction is [eIF5A protein]-L-lysine + spermidine = [eIF5A protein]-deoxyhypusine + propane-1,3-diamine. It participates in protein modification; eIF5A hypusination. Catalyzes the NAD-dependent oxidative cleavage of spermidine and the subsequent transfer of the butylamine moiety of spermidine to the epsilon-amino group of a specific lysine residue of the eIF-5A precursor protein to form the intermediate deoxyhypusine residue. In Saccharolobus islandicus (strain M.16.4 / Kamchatka #3) (Sulfolobus islandicus), this protein is Probable deoxyhypusine synthase.